The sequence spans 367 residues: Probable dual-specificity RNA methyltransferase RlmN (367 aa).

The Proton acceptor role is filled by Glu92. Residues 98-326 (QEYGLSVCVT…YDTLKKNGIN (229 aa)) form the Radical SAM core domain. A disulfide bridge links Cys105 with Cys341. [4Fe-4S] cluster-binding residues include Cys112, Cys116, and Cys119. S-adenosyl-L-methionine contacts are provided by residues 164 to 165 (GE), Ser196, 219 to 221 (SLH), and Asn297. Cys341 serves as the catalytic S-methylcysteine intermediate.

The protein belongs to the radical SAM superfamily. RlmN family. The cofactor is [4Fe-4S] cluster.

The protein localises to the cytoplasm. It catalyses the reaction adenosine(2503) in 23S rRNA + 2 reduced [2Fe-2S]-[ferredoxin] + 2 S-adenosyl-L-methionine = 2-methyladenosine(2503) in 23S rRNA + 5'-deoxyadenosine + L-methionine + 2 oxidized [2Fe-2S]-[ferredoxin] + S-adenosyl-L-homocysteine. The enzyme catalyses adenosine(37) in tRNA + 2 reduced [2Fe-2S]-[ferredoxin] + 2 S-adenosyl-L-methionine = 2-methyladenosine(37) in tRNA + 5'-deoxyadenosine + L-methionine + 2 oxidized [2Fe-2S]-[ferredoxin] + S-adenosyl-L-homocysteine. Specifically methylates position 2 of adenine 2503 in 23S rRNA and position 2 of adenine 37 in tRNAs. This chain is Probable dual-specificity RNA methyltransferase RlmN, found in Listeria welshimeri serovar 6b (strain ATCC 35897 / DSM 20650 / CCUG 15529 / CIP 8149 / NCTC 11857 / SLCC 5334 / V8).